We begin with the raw amino-acid sequence, 545 residues long: CTP synthase (545 aa).

Residues 1–266 form an amidoligase domain region; the sequence is MTTNYIFVTG…DDYICKRFSL (266 aa). Position 14 (Ser-14) interacts with CTP. Position 14 (Ser-14) interacts with UTP. ATP-binding positions include 15-20 and Asp-72; that span reads SLGKGI. The Mg(2+) site is built by Asp-72 and Glu-140. CTP-binding positions include 147–149, 187–192, and Lys-223; these read DIE and KTKPTQ. Residues 187 to 192 and Lys-223 each bind UTP; that span reads KTKPTQ. 239 to 241 contacts ATP; sequence KDV. The 252-residue stretch at 291 to 542 folds into the Glutamine amidotransferase type-1 domain; that stretch reads TIGMVGKYIE…VKAASEYQKR (252 aa). Gly-352 serves as a coordination point for L-glutamine. Catalysis depends on Cys-379, which acts as the Nucleophile; for glutamine hydrolysis. Residues 380 to 383, Glu-403, and Arg-470 each bind L-glutamine; that span reads LGMQ. Residues His-515 and Glu-517 contribute to the active site.

The protein belongs to the CTP synthase family. Homotetramer.

The catalysed reaction is UTP + L-glutamine + ATP + H2O = CTP + L-glutamate + ADP + phosphate + 2 H(+). It carries out the reaction L-glutamine + H2O = L-glutamate + NH4(+). It catalyses the reaction UTP + NH4(+) + ATP = CTP + ADP + phosphate + 2 H(+). The protein operates within pyrimidine metabolism; CTP biosynthesis via de novo pathway; CTP from UDP: step 2/2. Its activity is regulated as follows. Allosterically activated by GTP, when glutamine is the substrate; GTP has no effect on the reaction when ammonia is the substrate. The allosteric effector GTP functions by stabilizing the protein conformation that binds the tetrahedral intermediate(s) formed during glutamine hydrolysis. Inhibited by the product CTP, via allosteric rather than competitive inhibition. Functionally, catalyzes the ATP-dependent amination of UTP to CTP with either L-glutamine or ammonia as the source of nitrogen. Regulates intracellular CTP levels through interactions with the four ribonucleotide triphosphates. The protein is CTP synthase of Cronobacter sakazakii (strain ATCC BAA-894) (Enterobacter sakazakii).